Consider the following 663-residue polypeptide: UvrABC system protein B (663 aa).

A compositionally biased stretch (basic and acidic residues) spans 1–10; sequence MIDKRDDKPF. Positions 1 to 23 are disordered; sequence MIDKRDDKPFKLKSKYKPSGDQP. A Helicase ATP-binding domain is found at 31–418; the sequence is DNIEGGEKAQ…TNTIIEQIIR (388 aa). 44-51 is an ATP binding site; that stretch reads GATGTGKT. The Beta-hairpin signature appears at 97 to 120; sequence YYDYYQPEAYVPSSDTYIEKDSSV. Residues 435–597 form the Helicase C-terminal domain; sequence QMDDLLGEIN…IVPQTIKKDI (163 aa). Residues 627–662 form the UVR domain; the sequence is KEAINALQKQMQEAAELLDFELAAQMRDLILELKLM.

The protein belongs to the UvrB family. In terms of assembly, forms a heterotetramer with UvrA during the search for lesions. Interacts with UvrC in an incision complex.

The protein resides in the cytoplasm. The UvrABC repair system catalyzes the recognition and processing of DNA lesions. A damage recognition complex composed of 2 UvrA and 2 UvrB subunits scans DNA for abnormalities. Upon binding of the UvrA(2)B(2) complex to a putative damaged site, the DNA wraps around one UvrB monomer. DNA wrap is dependent on ATP binding by UvrB and probably causes local melting of the DNA helix, facilitating insertion of UvrB beta-hairpin between the DNA strands. Then UvrB probes one DNA strand for the presence of a lesion. If a lesion is found the UvrA subunits dissociate and the UvrB-DNA preincision complex is formed. This complex is subsequently bound by UvrC and the second UvrB is released. If no lesion is found, the DNA wraps around the other UvrB subunit that will check the other stand for damage. This Streptococcus pyogenes serotype M18 (strain MGAS8232) protein is UvrABC system protein B.